A 414-amino-acid chain; its full sequence is Glyco-Gag protein (414 aa).

Residues 1-51 are Cytoplasmic-facing; it reads MSGASSGTAIGAHLFGVSPECRVLIGDEGAGPSKSLSEVSFSVWYQSRAAR. Residues 52–72 traverse the membrane as a helical segment; the sequence is LVIFCLVASFLVPCLTFLIAE. Residues 73–414 lie on the Extracellular side of the membrane; that stretch reads TVMGQTIATP…TNLAQVKQVV (342 aa). Asn-134 carries an N-linked (GlcNAc...) asparagine; by host glycan. The interval 171–282 is disordered; the sequence is VRPFLPPPKP…LREGPNNRPQ (112 aa). A compositionally biased stretch (pro residues) spans 174-193; the sequence is FLPPPKPPTPLPQPLSPQPS. Residues 194–206 show a composition bias toward low complexity; that stretch reads APLTSSLYPVLPK. The span at 210 to 220 shows a compositional bias: pro residues; that stretch reads PKPPVLPPDPS.

Glycosylated by host. Post-translationally, cleaved by host near the middle of the molecule, releasing the c-terminal half containing capsid and nucleoprotein domains op GAG.

The protein resides in the host cell membrane. Plays a role in viral particle release. Presumably acts by facilitating the fission of the virion bud at the cell surface. In Felidae (cat family), this protein is Glyco-Gag protein.